Reading from the N-terminus, the 308-residue chain is GTP cyclohydrolase FolE2 (308 aa).

It belongs to the GTP cyclohydrolase IV family.

The catalysed reaction is GTP + H2O = 7,8-dihydroneopterin 3'-triphosphate + formate + H(+). Its pathway is cofactor biosynthesis; 7,8-dihydroneopterin triphosphate biosynthesis; 7,8-dihydroneopterin triphosphate from GTP: step 1/1. In terms of biological role, converts GTP to 7,8-dihydroneopterin triphosphate. This is GTP cyclohydrolase FolE2 from Idiomarina loihiensis (strain ATCC BAA-735 / DSM 15497 / L2-TR).